Reading from the N-terminus, the 232-residue chain is Phosphatidylserine decarboxylase proenzyme (232 aa).

Ser190 acts as the Schiff-base intermediate with substrate; via pyruvic acid in catalysis. Ser190 carries the post-translational modification Pyruvic acid (Ser); by autocatalysis.

It belongs to the phosphatidylserine decarboxylase family. PSD-A subfamily. In terms of assembly, heterodimer of a large membrane-associated beta subunit and a small pyruvoyl-containing alpha subunit. It depends on pyruvate as a cofactor. In terms of processing, is synthesized initially as an inactive proenzyme. Formation of the active enzyme involves a self-maturation process in which the active site pyruvoyl group is generated from an internal serine residue via an autocatalytic post-translational modification. Two non-identical subunits are generated from the proenzyme in this reaction, and the pyruvate is formed at the N-terminus of the alpha chain, which is derived from the carboxyl end of the proenzyme. The post-translation cleavage follows an unusual pathway, termed non-hydrolytic serinolysis, in which the side chain hydroxyl group of the serine supplies its oxygen atom to form the C-terminus of the beta chain, while the remainder of the serine residue undergoes an oxidative deamination to produce ammonia and the pyruvoyl prosthetic group on the alpha chain.

It localises to the cell membrane. The enzyme catalyses a 1,2-diacyl-sn-glycero-3-phospho-L-serine + H(+) = a 1,2-diacyl-sn-glycero-3-phosphoethanolamine + CO2. It participates in phospholipid metabolism; phosphatidylethanolamine biosynthesis; phosphatidylethanolamine from CDP-diacylglycerol: step 2/2. In terms of biological role, catalyzes the formation of phosphatidylethanolamine (PtdEtn) from phosphatidylserine (PtdSer). In Beijerinckia indica subsp. indica (strain ATCC 9039 / DSM 1715 / NCIMB 8712), this protein is Phosphatidylserine decarboxylase proenzyme.